A 323-amino-acid polypeptide reads, in one-letter code: Acetyl-coenzyme A carboxylase carboxyl transferase subunit alpha (323 aa).

In terms of domain architecture, CoA carboxyltransferase C-terminal spans 35–296 (EVLSELDELR…GMTLKKCLDE (262 aa)).

This sequence belongs to the AccA family. As to quaternary structure, acetyl-CoA carboxylase is a heterohexamer composed of biotin carboxyl carrier protein (AccB), biotin carboxylase (AccC) and two subunits each of ACCase subunit alpha (AccA) and ACCase subunit beta (AccD).

The protein localises to the cytoplasm. The catalysed reaction is N(6)-carboxybiotinyl-L-lysyl-[protein] + acetyl-CoA = N(6)-biotinyl-L-lysyl-[protein] + malonyl-CoA. It participates in lipid metabolism; malonyl-CoA biosynthesis; malonyl-CoA from acetyl-CoA: step 1/1. Functionally, component of the acetyl coenzyme A carboxylase (ACC) complex. First, biotin carboxylase catalyzes the carboxylation of biotin on its carrier protein (BCCP) and then the CO(2) group is transferred by the carboxyltransferase to acetyl-CoA to form malonyl-CoA. The polypeptide is Acetyl-coenzyme A carboxylase carboxyl transferase subunit alpha (Aquifex aeolicus (strain VF5)).